A 588-amino-acid chain; its full sequence is Probable basic-leucine zipper transcription factor M (588 aa).

Positions 127-157 form a coiled coil; that stretch reads QVEQQQEQEQEQEQQQKQQQQQYIEKQIQEI. The segment covering 221-240 has biased composition (low complexity); sequence QQNHIDNQSLNNSNTKTSKN. A disordered region spans residues 221 to 250; that stretch reads QQNHIDNQSLNNSNTKTSKNQQKDNNLPKK. Positions 263–326 constitute a bZIP domain; the sequence is NNNNIEKKRD…GSNLMRPEPE (64 aa). The segment at 269 to 289 is basic motif; the sequence is KKRDQTESSKNFREKKKEYVK. Residues 291 to 312 form a leucine-zipper region; the sequence is IESKILALTLENDKLKKENDSL.

It belongs to the bZIP family.

It localises to the nucleus. In terms of biological role, probable transcriptional regulator. This is Probable basic-leucine zipper transcription factor M (bzpM) from Dictyostelium discoideum (Social amoeba).